The primary structure comprises 548 residues: Chaperonin GroEL (548 aa).

ATP is bound by residues threonine 29–proline 32, lysine 50, aspartate 86–threonine 90, glycine 416, and aspartate 497.

This sequence belongs to the chaperonin (HSP60) family. As to quaternary structure, forms a cylinder of 14 subunits composed of two heptameric rings stacked back-to-back. Interacts with the co-chaperonin GroES.

The protein localises to the cytoplasm. The enzyme catalyses ATP + H2O + a folded polypeptide = ADP + phosphate + an unfolded polypeptide.. In terms of biological role, together with its co-chaperonin GroES, plays an essential role in assisting protein folding. The GroEL-GroES system forms a nano-cage that allows encapsulation of the non-native substrate proteins and provides a physical environment optimized to promote and accelerate protein folding. The polypeptide is Chaperonin GroEL (Neorickettsia sennetsu (strain ATCC VR-367 / Miyayama) (Ehrlichia sennetsu)).